The primary structure comprises 335 residues: tRNA pseudouridine synthase D (335 aa).

Aspartate 77 acts as the Nucleophile in catalysis. The region spanning 152–308 (GFPNYFTEQR…AQHLSWSFIP (157 aa)) is the TRUD domain.

It belongs to the pseudouridine synthase TruD family.

It catalyses the reaction uridine(13) in tRNA = pseudouridine(13) in tRNA. In terms of biological role, responsible for synthesis of pseudouridine from uracil-13 in transfer RNAs. In Histophilus somni (strain 129Pt) (Haemophilus somnus), this protein is tRNA pseudouridine synthase D.